The chain runs to 974 residues: Translation initiation factor IF-2 (974 aa).

Residues 31-376 (FVKSASSTVE…APAVGGVRLP (346 aa)) form a disordered region. The span at 52–68 (PSAKSADSAARPAAKPG) shows a compositional bias: low complexity. The span at 83–96 (GPRPGPKPAAPAPA) shows a compositional bias: pro residues. Positions 97 to 133 (APAAAAPAATPAAQAPAPAAPAASTATPAAPASNAPK) are enriched in low complexity. Pro residues predominate over residues 134–147 (PGRPTPAAPAPAAP). Composition is skewed to low complexity over residues 148 to 166 (AAPA…STGA) and 179 to 191 (RVGN…APAE). Pro residues-rich tracts occupy residues 195 to 210 (PRPA…PRPA) and 253 to 266 (RPSP…PNPG). A compositionally biased stretch (low complexity) spans 267 to 277 (AMPARSARPAP). Over residues 279–332 (GRPGRPGGAPGGRPGGGGGGYRGGGAPGAGAGAPGGGAPAGGFRGRPGGGGRPG) the composition is skewed to gly residues. The span at 349-358 (RRGRKSKRQK) shows a compositional bias: basic residues. Residues 470-641 (SRPPVVTVMG…AVLLTADAAL (172 aa)) form the tr-type G domain. A G1 region spans residues 479–486 (GHVDHGKT). Position 479-486 (479-486 (GHVDHGKT)) interacts with GTP. Residues 504–508 (GITQH) are G2. Positions 529–532 (DTPG) are G3. GTP-binding positions include 529 to 533 (DTPGH) and 583 to 586 (NKID). The G4 stretch occupies residues 583 to 586 (NKID). Residues 619-621 (SAK) are G5.

Belongs to the TRAFAC class translation factor GTPase superfamily. Classic translation factor GTPase family. IF-2 subfamily.

The protein resides in the cytoplasm. Functionally, one of the essential components for the initiation of protein synthesis. Protects formylmethionyl-tRNA from spontaneous hydrolysis and promotes its binding to the 30S ribosomal subunits. Also involved in the hydrolysis of GTP during the formation of the 70S ribosomal complex. The sequence is that of Translation initiation factor IF-2 from Rhodococcus opacus (strain B4).